The following is a 582-amino-acid chain: Protein LYRIC (582 aa).

The Lumenal segment spans residues 1-48 (MAARSWQDELAQQAEEGSARLREMLSVGLGFLRTELGLDLGLEPKRYP). The activation of NF-kappa-B stretch occupies residues 1–71 (MAARSWQDEL…LLLFLLGYGW (71 aa)). The chain crosses the membrane as a helical span at residues 49-69 (GWVILVGTGALGLLLLFLLGY). The Cytoplasmic portion of the chain corresponds to 70 to 582 (GWAAACAGAR…KKKKKARRET (513 aa)). The tract at residues 72 to 169 (AAACAGARKK…EKSKKNKKKS (98 aa)) is interaction with BCCIP. The tract at residues 78–222 (ARKKRRSPPR…DSGSLDSTIP (145 aa)) is disordered. Low complexity predominate over residues 93-106 (AAVPAAAPDDLALL). The interval 101-205 (DDLALLKNLR…ISHREKRQQR (105 aa)) is interaction with RELA. Residues 109–127 (LRSEEQKKKNRKKLSEKPK) show a composition bias toward basic and acidic residues. A Phosphothreonine modification is found at threonine 143. The span at 160–169 (EKSKKNKKKS) shows a compositional bias: basic residues. The residue at position 180 (serine 180) is a Phosphoserine. Over residues 198–208 (HREKRQQRKRD) the composition is skewed to basic residues. Residues serine 216 and serine 251 each carry the phosphoserine modification. Lysine 264 is subject to N6-acetyllysine. The interval 280–582 (TVNGGGWNEK…KKKKKARRET (303 aa)) is disordered. 8 positions are modified to phosphoserine: serine 298, serine 306, serine 308, serine 311, serine 323, serine 339, serine 344, and serine 369. A compositionally biased stretch (polar residues) spans 320–333 (SAWSQDTGDANTNG). Composition is skewed to polar residues over residues 354–372 (EPVS…SRNQ) and 383–394 (NGLSSADPNSDW). Positions 381 to 443 (GLNGLSSADP…EGALPTGKSK (63 aa)) are lung-homing for mammary tumors. 2 positions are modified to phosphoserine: serine 415 and serine 426. Residues 421–434 (DDQKVSDDDKEKGE) are compositionally biased toward basic and acidic residues. Over residues 441 to 451 (KSKKKKKKKKK) the composition is skewed to basic residues. Serine 457 is modified (phosphoserine). Threonine 458 is subject to Phosphothreonine. 3 positions are modified to phosphoserine: serine 478, serine 494, and serine 496. 2 stretches are compositionally biased toward polar residues: residues 504 to 520 (KNSQ…STEP) and 549 to 568 (NTKQ…SWES). At serine 568 the chain carries Phosphoserine. The span at 571–582 (QIKKKKKARRET) shows a compositional bias: basic residues.

As to quaternary structure, interacts with BCCIP, CREBBP/CBP and RELA/p65. As to expression, widely expressed with highest levels in muscle-dominating organs such as skeletal muscle, heart, tongue and small intestine and in endocrine glands such as thyroid and adrenal gland. Overexpressed in various cancers including breast, brain, prostate, melanoma and glioblastoma multiforme.

It is found in the endoplasmic reticulum membrane. Its subcellular location is the nucleus membrane. The protein resides in the cell junction. The protein localises to the tight junction. It localises to the nucleus. It is found in the nucleolus. Its subcellular location is the cytoplasm. The protein resides in the perinuclear region. In terms of biological role, down-regulates SLC1A2/EAAT2 promoter activity when expressed ectopically. Activates the nuclear factor kappa-B (NF-kappa-B) transcription factor. Promotes anchorage-independent growth of immortalized melanocytes and astrocytes which is a key component in tumor cell expansion. Promotes lung metastasis and also has an effect on bone and brain metastasis, possibly by enhancing the seeding of tumor cells to the target organ endothelium. Induces chemoresistance. The chain is Protein LYRIC (MTDH) from Homo sapiens (Human).